A 912-amino-acid chain; its full sequence is Coatomer subunit beta (912 aa).

10 HEAT repeats span residues 59-96 (PIPQ…THLG), 100-135 (SEMI…REAE), 136-172 (VLEP…HFDY), 244-281 (SERS…APTA), 300-337 (NVKM…PNID), 339-375 (CKKV…KEFD), 397-434 (EVLG…TYPS), 441-479 (KKLI…AMTS), 550-575 (LKAQ…TSKS), and 576-612 (AYER…YLKY).

Oligomeric complex that consists of at least the alpha, beta, beta', gamma, delta, epsilon and zeta subunits.

It localises to the cytoplasm. The protein localises to the golgi apparatus membrane. It is found in the cytoplasmic vesicle. The protein resides in the COPI-coated vesicle membrane. Functionally, the coatomer is a cytosolic protein complex that binds to dilysine motifs and reversibly associates with Golgi non-clathrin-coated vesicles, which further mediate biosynthetic protein transport from the ER, via the Golgi up to the trans Golgi network. Coatomer complex is required for budding from Golgi membranes, and is essential for the retrograde Golgi-to-ER transport of dilysine-tagged proteins. The polypeptide is Coatomer subunit beta (copb) (Dictyostelium discoideum (Social amoeba)).